We begin with the raw amino-acid sequence, 229 residues long: MSKNSVIIVAAGKGKRMNSSISKQFLQIKNKPILYYTLSKFSAHESIDEIVLVTLEDKIEVCSDIIDKYNINKVSKIVPGGKERQDSVYNGLKAVSKDCEVVLIHDAARPFVTSDIIENGIRCANQYGAAACGVIPKDTIKIKNEKEFAIDTPNREDLFIVQTPQCFNYNIILDCHEKLKKHNKKVTDDTMVLENYGKSVYLYEGSYSNIKITTPEDLILGEQILEKLT.

Belongs to the IspD/TarI cytidylyltransferase family. IspD subfamily.

The enzyme catalyses 2-C-methyl-D-erythritol 4-phosphate + CTP + H(+) = 4-CDP-2-C-methyl-D-erythritol + diphosphate. The protein operates within isoprenoid biosynthesis; isopentenyl diphosphate biosynthesis via DXP pathway; isopentenyl diphosphate from 1-deoxy-D-xylulose 5-phosphate: step 2/6. Catalyzes the formation of 4-diphosphocytidyl-2-C-methyl-D-erythritol from CTP and 2-C-methyl-D-erythritol 4-phosphate (MEP). The chain is 2-C-methyl-D-erythritol 4-phosphate cytidylyltransferase from Clostridium botulinum (strain Langeland / NCTC 10281 / Type F).